The primary structure comprises 530 residues: Calnexin homolog 1 (530 aa).

A signal peptide spans 1–20; that stretch reads MRQRQLFSVFLLLLAFVSFQ. Residues 21–466 lie on the Lumenal side of the membrane; the sequence is KLCYCDDQTV…EKAEQQPNLT (446 aa). Ca(2+) is bound by residues S34 and D65. A disulfide bridge connects residues C108 and C143. Y112, K114, Y134, and D141 together coordinate an alpha-D-glucoside. The disordered stretch occupies residues 216-315; the sequence is ALIPAKTIPD…KCEAAPGCGE (100 aa). Positions 223–356 are p domain (Extended arm); that stretch reads IPDPEDKKPE…RDIPNPDYFE (134 aa). Residues 224 to 240 are compositionally biased toward basic and acidic residues; the sequence is PDPEDKKPEDWDERAKI. 5 repeat units span residues 225–236, 242–253, 261–272, 280–291, and 295–305. 4 X approximate repeats stretches follow at residues 225–291 and 295–352; these read DPED…DWDD and GMWE…IPNP. Over residues 250-281 the composition is skewed to acidic residues; the sequence is DWDEDAPMEIEDEEAEKPEGWLDDEPEEVDDP. A disulfide bond links C307 and C313. Tandem repeats lie at residues 314-324, 328-338, and 342-352. E371 is a binding site for an alpha-D-glucoside. A Ca(2+)-binding site is contributed by D382. N-linked (GlcNAc...) asparagine glycosylation occurs at N464. A helical membrane pass occupies residues 467-487; sequence IGVLVAIVVVFFSLFLKLIFG. At 488-530 the chain is on the cytoplasmic side; it reads GKKAAAPVEKKKPEVAESSKSGDEAEKKEETAAPRKRQPRRDN. Positions 490–530 are disordered; sequence KAAAPVEKKKPEVAESSKSGDEAEKKEETAAPRKRQPRRDN. Over residues 495 to 520 the composition is skewed to basic and acidic residues; that stretch reads VEKKKPEVAESSKSGDEAEKKEETAA. S508 bears the Phosphoserine mark. The segment covering 521-530 has biased composition (basic residues); it reads PRKRQPRRDN.

This sequence belongs to the calreticulin family.

It is found in the endoplasmic reticulum membrane. Calcium-binding protein that interacts with newly synthesized monoglucosylated glycoproteins in the endoplasmic reticulum. It may act in assisting protein assembly and/or in the retention within the ER of unassembled protein subunits. It seems to play a major role in the quality control apparatus of the ER by the retention of incorrectly folded proteins. The polypeptide is Calnexin homolog 1 (CNX1) (Arabidopsis thaliana (Mouse-ear cress)).